The following is a 308-amino-acid chain: Mycothiol acetyltransferase (308 aa).

Residue glutamate 44 participates in 1D-myo-inositol 2-(L-cysteinylamino)-2-deoxy-alpha-D-glucopyranoside binding. 83–85 serves as a coordination point for acetyl-CoA; it reads AVV. Residues 161 to 308 enclose the N-acetyltransferase domain; the sequence is VRLRTYAGSA…DVAYGRPEGD (148 aa). Glutamate 188, lysine 230, and glutamate 238 together coordinate 1D-myo-inositol 2-(L-cysteinylamino)-2-deoxy-alpha-D-glucopyranoside. Acetyl-CoA is bound by residues 242-244 and 249-255; these read VGV and QGRGLGR. 1D-myo-inositol 2-(L-cysteinylamino)-2-deoxy-alpha-D-glucopyranoside is bound at residue tyrosine 276. Residue 281–286 coordinates acetyl-CoA; it reads NTAALH.

The protein belongs to the acetyltransferase family. MshD subfamily. As to quaternary structure, monomer.

The enzyme catalyses 1D-myo-inositol 2-(L-cysteinylamino)-2-deoxy-alpha-D-glucopyranoside + acetyl-CoA = mycothiol + CoA + H(+). Catalyzes the transfer of acetyl from acetyl-CoA to desacetylmycothiol (Cys-GlcN-Ins) to form mycothiol. The chain is Mycothiol acetyltransferase from Gordonia bronchialis (strain ATCC 25592 / DSM 43247 / BCRC 13721 / JCM 3198 / KCTC 3076 / NBRC 16047 / NCTC 10667) (Rhodococcus bronchialis).